Here is a 384-residue protein sequence, read N- to C-terminus: Probable endopolygalacturonase C (384 aa).

The N-terminal stretch at 1-19 is a signal peptide; that stretch reads MVRQLILISSLLAAVAVRA. Residues 20–40 constitute a propeptide that is removed on maturation; it reads APADPAHPMVTEAPDVNLVEK. Residues C45 and C63 are joined by a disulfide bond. PbH1 repeat units lie at residues 176 to 207 and 208 to 229; these read STDL…DIGE and STYI…AINS. D222 serves as the catalytic Proton donor. A disulfide bridge links C224 with C240. The active site involves H244. 2 PbH1 repeats span residues 254 to 280 and 288 to 310; these read RDDN…RIKT and VSEV…VIEQ. N261 is a glycosylation site (N-linked (GlcNAc...) asparagine). 2 disulfide bridges follow: C349–C354 and C373–C382.

This sequence belongs to the glycosyl hydrolase 28 family.

The protein localises to the secreted. It carries out the reaction (1,4-alpha-D-galacturonosyl)n+m + H2O = (1,4-alpha-D-galacturonosyl)n + (1,4-alpha-D-galacturonosyl)m.. Its function is as follows. Involved in maceration and soft-rotting of plant tissue. Hydrolyzes the 1,4-alpha glycosidic bonds of de-esterified pectate in the smooth region of the plant cell wall. The polypeptide is Probable endopolygalacturonase C (pgaC) (Aspergillus niger (strain ATCC MYA-4892 / CBS 513.88 / FGSC A1513)).